The chain runs to 585 residues: SCF E3 ubiquitin ligase complex F-box protein grrA (585 aa).

Residues 1-10 (MARSRQPTRF) show a composition bias toward polar residues. Disordered stretches follow at residues 1–34 (MARS…DTDF) and 41–60 (DSQS…QNDP). Positions 11 to 25 (SSEAPSESSSSTSPE) are enriched in low complexity. The F-box domain maps to 65 to 113 (PPIAYLPPEILISIFSKLSSPRDLLSCLLVCRIWALNCVGLLWHRPSCN). 13 LRR repeats span residues 147-171 (TEDV…TLTN), 172-197 (CRKL…DVSE), 198-223 (LRSL…NITG), 224-249 (CVKV…KLNG), 250-275 (VSQV…DLQE), 276-301 (CKLV…RLAH), 302-329 (CTEI…DLTA), 330-355 (CENI…VLAK), 356-381 (CKFI…HLGH), 382-407 (CSNI…DLAC), 408-432 (CSRL…GLVK), 433-465 (CQLI…HLSY), and 466-491 (CVNL…SLTG).

Part of a SCF E3 ubiquitin ligase complex. Specifically expressed in ascus mother cells.

Its subcellular location is the cytoplasm. Involved in meiosis and required for ascospore formation. Involved in substrate recognition in ubiquitin-dependent degradation. In Emericella nidulans (strain FGSC A4 / ATCC 38163 / CBS 112.46 / NRRL 194 / M139) (Aspergillus nidulans), this protein is SCF E3 ubiquitin ligase complex F-box protein grrA (grrA).